Here is a 178-residue protein sequence, read N- to C-terminus: Caveolin-1 (178 aa).

Ser2 carries the post-translational modification N-acetylserine. Ser2 carries the phosphoserine modification. Positions 2–94 are required for homooligomerization; that stretch reads SGGKYVDSEG…WKASFTTFTV (93 aa). The Cytoplasmic portion of the chain corresponds to 2 to 104; sequence SGGKYVDSEG…TKYWFYRLLS (103 aa). N6-acetyllysine; alternate is present on Lys5. Lys5 participates in a covalent cross-link: Glycyl lysine isopeptide (Lys-Gly) (interchain with G-Cter in ubiquitin); alternate. Tyr6 bears the Phosphotyrosine mark. The residue at position 9 (Ser9) is a Phosphoserine. Tyr14 bears the Phosphotyrosine; by ABL1 mark. Tyr25 carries the phosphotyrosine modification. Residues Lys26, Lys30, Lys39, Lys47, and Lys57 each participate in a glycyl lysine isopeptide (Lys-Gly) (interchain with G-Cter in ubiquitin) cross-link. Residues 82 to 94 form an interaction with CAVIN3 region; that stretch reads DGIWKASFTTFTV. Residues 105–125 constitute an intramembrane region (helical); the sequence is AVFGIPMALIWGIYFAIVSFL. The Cytoplasmic portion of the chain corresponds to 126–178; sequence HIWVVVPYIKSFLIEIQCISRVYSIYIHTFCDPLFEAFGKVFSNIRINTQKEI. Positions 131 to 142 are interacts with SPRY1, SPRY2, SPRY3 and SPRY4; it reads VPYIKSFLIEIQ. Residues Cys143 and Cys156 are each lipidated (S-palmitoyl cysteine). Residues 149 to 160 form an interacts with SPRY1, SPRY2, and SPRY4 region; the sequence is SIYIHTFCDPLF. The interval 167-178 is interacts with SPRY1, SPRY2, SPRY3 and SPRY4; it reads FSNIRINTQKEI.

The protein belongs to the caveolin family. In terms of assembly, homooligomer. Interacts (via the N-terminus) with DPP4; the interaction is direct. Forms a stable heterooligomeric complex with CAV2 that targets to lipid rafts and drives caveolae formation. Interacts with PACSIN2; this interaction induces membrane tubulation. Interacts with BMX, BTK, CTNNB1, CDH1, GLIPR2, JUP, NOSTRIN, SNAP25 and STX1A. Interacts with SLC7A9. Interacts with TGFBR1. Interacts with CAVIN3 (via leucine-zipper domain) in a cholesterol-sensitive manner. Interacts with CAVIN1. Interacts with EHD2 in a cholesterol-dependent manner. Forms a ternary complex with UBXN6 and VCP; mediates CAV1 targeting to lysosomes for degradation. Interacts with ABCG1; this interaction regulates ABCG1-mediated cholesterol efflux. Interacts with NEU3; this interaction enhances NEU3 sialidase activity within caveola. Interacts (via C-terminus) with SPRY1, SPRY2 (via C-terminus), SPRY3, and SPRY4. In terms of processing, phosphorylated at Tyr-14 by ABL1 in response to oxidative stress. Ubiquitinated. Undergo monoubiquitination and multi- and/or polyubiquitination. Monoubiquitination of N-terminal lysines promotes integration in a ternary complex with UBXN6 and VCP which promotes oligomeric CAV1 targeting to lysosomes for degradation. Ubiquitinated by ZNRF1; leading to degradation and modulation of the TLR4-mediated immune response.

It is found in the golgi apparatus membrane. The protein localises to the cell membrane. The protein resides in the membrane. Its subcellular location is the caveola. It localises to the membrane raft. Its function is as follows. May act as a scaffolding protein within caveolar membranes. Forms a stable heterooligomeric complex with CAV2 that targets to lipid rafts and drives caveolae formation. Mediates the recruitment of CAVIN proteins (CAVIN1/2/3/4) to the caveolae. Interacts directly with G-protein alpha subunits and can functionally regulate their activity. Involved in the costimulatory signal essential for T-cell receptor (TCR)-mediated T-cell activation. Its binding to DPP4 induces T-cell proliferation and NF-kappa-B activation in a T-cell receptor/CD3-dependent manner. Recruits CTNNB1 to caveolar membranes and may regulate CTNNB1-mediated signaling through the Wnt pathway. Negatively regulates TGFB1-mediated activation of SMAD2/3 by mediating the internalization of TGFBR1 from membrane rafts leading to its subsequent degradation. Binds 20(S)-hydroxycholesterol (20(S)-OHC). The sequence is that of Caveolin-1 (CAV1) from Rhinolophus ferrumequinum (Greater horseshoe bat).